The chain runs to 349 residues: Interferon regulatory factor 2 (349 aa).

Positions arginine 5–proline 113 form a DNA-binding region, IRF tryptophan pentad repeat. Lysine 75 and lysine 78 each carry N6-acetyllysine. Residue lysine 137 forms a Glycyl lysine isopeptide (Lys-Gly) (interchain with G-Cter in SUMO); alternate linkage. Lysine 137 is covalently cross-linked (Glycyl lysine isopeptide (Lys-Gly) (interchain with G-Cter in SUMO2); alternate). Lysine 166 is covalently cross-linked (Glycyl lysine isopeptide (Lys-Gly) (interchain with G-Cter in SUMO)). Residue serine 225 is modified to Phosphoserine. The segment covering tyrosine 230 to valine 239 has biased composition (polar residues). The tract at residues tyrosine 230–arginine 253 is disordered. Lysine 260 is covalently cross-linked (Glycyl lysine isopeptide (Lys-Gly) (interchain with G-Cter in SUMO2)). A Glycyl lysine isopeptide (Lys-Gly) (interchain with G-Cter in SUMO) cross-link involves residue lysine 293. The tract at residues serine 303–cysteine 349 is disordered.

This sequence belongs to the IRF family. Interacts with BRD7, IRF2BP1 and IRF2BP2. Interacts with CREBBP in growing cells; the interaction acetylates IRF2 and regulates IRF2-dependent H4 promoter activity. Post-translationally, acetylated by CBP/ p300 during cell-growth. Acetylation on Lys-75 is required for stimulation of H4 promoter activity. In terms of processing, the major sites of sumoylation are Lys-137 and Lys-293. Sumoylation with SUMO1 increases its transcriptional repressor activity on IRF1 and diminishes its ability to activate ISRE and H4 promoter.

The protein resides in the nucleus. In terms of biological role, specifically binds to the upstream regulatory region of type I IFN and IFN-inducible MHC class I genes (the interferon consensus sequence (ICS)) and represses those genes. Also acts as an activator for several genes including H4 and IL7. Constitutively binds to the ISRE promoter to activate IL7. Involved in cell cycle regulation through binding the site II (HiNF-M) promoter region of H4 and activating transcription during cell growth. Antagonizes IRF1 transcriptional activation. This Mus musculus (Mouse) protein is Interferon regulatory factor 2 (Irf2).